The chain runs to 426 residues: Riboflavin biosynthesis protein PYRD, chloroplastic (426 aa).

Residues 1-61 constitute a chloroplast transit peptide; sequence MQISCLPISI…SQTGFSNPVL (61 aa). Positions 72–194 constitute a CMP/dCMP-type deaminase domain; sequence VDDSFYMRKC…RLKDAGIDVT (123 aa). His-121 provides a ligand contact to Zn(2+). The active-site Proton donor is Glu-123. Zn(2+) is bound by residues Cys-146 and Cys-155.

It depends on Zn(2+) as a cofactor.

The protein resides in the plastid. It localises to the chloroplast. The catalysed reaction is 2,5-diamino-6-hydroxy-4-(5-phosphoribosylamino)-pyrimidine + H2O + H(+) = 5-amino-6-(5-phospho-D-ribosylamino)uracil + NH4(+). It functions in the pathway cofactor biosynthesis; riboflavin biosynthesis; 5-amino-6-(D-ribitylamino)uracil from GTP: step 2/4. Its function is as follows. Monofunctional pyrimidine deaminase involved in the riboflavin biosynthesis pathway. Also has a reductase domain that lacks catalytically essential substrate-binding residues. This Arabidopsis thaliana (Mouse-ear cress) protein is Riboflavin biosynthesis protein PYRD, chloroplastic (PYRD).